A 157-amino-acid polypeptide reads, in one-letter code: Large ribosomal subunit protein bL17 (157 aa).

Positions 124–157 (AAPVVSKQDRAKRVKGSKKAESRSQENEGGDAAE) are disordered.

Belongs to the bacterial ribosomal protein bL17 family. Part of the 50S ribosomal subunit. Contacts protein L32.

The chain is Large ribosomal subunit protein bL17 from Chlorobaculum tepidum (strain ATCC 49652 / DSM 12025 / NBRC 103806 / TLS) (Chlorobium tepidum).